Reading from the N-terminus, the 838-residue chain is Collagen alpha-2(I) chain (838 aa).

Residues 1–838 (GPMGIMGPRG…GTVGPAGIRS (838 aa)) are disordered. The segment covering 11–38 (FQGPAGEPGEPGQTGPAGARGPAGPPGK) has biased composition (low complexity). A compositionally biased stretch (basic and acidic residues) spans 39 to 53 (AGEDGHPGKPGRPGE). Composition is skewed to low complexity over residues 101 to 122 (SRGS…SAGP), 137 to 147 (PVGNTGPAGPA), 215 to 236 (NGES…RGIP), and 329 to 344 (AGNR…NGAQ). Residues 351 to 360 (GVQGGKGEQG) show a composition bias toward gly residues. Low complexity-rich tracts occupy residues 407–424 (PGES…SRGP) and 436–446 (EPGVVGAPGTA). Residues 447-456 (GPAGSGGIPG) are compositionally biased toward gly residues. 3 stretches are compositionally biased toward low complexity: residues 479–523 (VGTT…PRGT), 530–550 (VGPA…QPGA), and 568–581 (SAGP…PGPA). Over residues 582–591 (GSRGDGGPPG) the composition is skewed to gly residues. The segment covering 593–602 (TGFPGAAGRT) has biased composition (low complexity). The segment covering 633-642 (GETGAGGPPG) has biased composition (gly residues). Residues 649-689 (TAGPQGIIGAPGIIGIPGSRGIPGVSGSVGEPGPIGISGPP) are compositionally biased toward low complexity. The span at 693-702 (GPSGGVGNPG) shows a compositional bias: gly residues. Composition is skewed to low complexity over residues 703 to 718 (VNGA…NPGN), 736 to 758 (YAGN…VGPA), and 766 to 781 (EPGP…AIGP).

It belongs to the fibrillar collagen family. As to quaternary structure, trimers of one alpha 2(I) and two alpha 1(I) chains. Interacts (via C-terminus) with TMEM131 (via PapD-L domain); the interaction is direct and is involved in assembly and TRAPPIII ER-to-Golgi transport complex-dependent secretion of collagen. Prolines at the third position of the tripeptide repeating unit (G-X-Y) are hydroxylated in some or all of the chains. As to expression, forms the fibrils of tendon, ligaments and bones. In bones, the fibrils are mineralized with calcium hydroxyapatite.

The protein resides in the secreted. Its subcellular location is the extracellular space. It localises to the extracellular matrix. Functionally, type I collagen is a member of group I collagen (fibrillar forming collagen). The protein is Collagen alpha-2(I) chain of Cyclopes didactylus (Silky anteater).